A 215-amino-acid chain; its full sequence is Ribonuclease T (215 aa).

The region spanning 20-194 (VVIDVETAGF…YDTERTAVLF (175 aa)) is the Exonuclease domain. Positions 23, 25, 181, and 186 each coordinate Mg(2+). His-181 acts as the Proton donor/acceptor in catalysis.

The protein belongs to the RNase T family. Homodimer. Mg(2+) is required as a cofactor.

Functionally, trims short 3' overhangs of a variety of RNA species, leaving a one or two nucleotide 3' overhang. Responsible for the end-turnover of tRNA: specifically removes the terminal AMP residue from uncharged tRNA (tRNA-C-C-A). Also appears to be involved in tRNA biosynthesis. The protein is Ribonuclease T of Shigella dysenteriae serotype 1 (strain Sd197).